The following is a 509-amino-acid chain: Glycogen synthase (509 aa).

Lysine 47 serves as a coordination point for ADP-alpha-D-glucose.

Belongs to the glycosyltransferase 1 family. Bacterial/plant glycogen synthase subfamily.

It carries out the reaction [(1-&gt;4)-alpha-D-glucosyl](n) + ADP-alpha-D-glucose = [(1-&gt;4)-alpha-D-glucosyl](n+1) + ADP + H(+). The protein operates within glycan biosynthesis; glycogen biosynthesis. In terms of biological role, synthesizes alpha-1,4-glucan chains using ADP-glucose. The chain is Glycogen synthase from Xanthomonas oryzae pv. oryzae (strain PXO99A).